The primary structure comprises 469 residues: 3-isopropylmalate dehydratase large subunit 1 (469 aa).

Positions 344, 404, and 407 each coordinate [4Fe-4S] cluster.

It belongs to the aconitase/IPM isomerase family. LeuC type 1 subfamily. As to quaternary structure, heterodimer of LeuC and LeuD. The cofactor is [4Fe-4S] cluster.

The catalysed reaction is (2R,3S)-3-isopropylmalate = (2S)-2-isopropylmalate. It participates in amino-acid biosynthesis; L-leucine biosynthesis; L-leucine from 3-methyl-2-oxobutanoate: step 2/4. In terms of biological role, catalyzes the isomerization between 2-isopropylmalate and 3-isopropylmalate, via the formation of 2-isopropylmaleate. In Rubrobacter xylanophilus (strain DSM 9941 / JCM 11954 / NBRC 16129 / PRD-1), this protein is 3-isopropylmalate dehydratase large subunit 1.